Reading from the N-terminus, the 239-residue chain is Uridylate kinase (239 aa).

13 to 16 (KVSG) is an ATP binding site. Residue Gly55 coordinates UMP. ATP contacts are provided by Gly56 and Arg60. Residues Asp75 and 136 to 143 (TGNPFFTT) each bind UMP. Thr163, Gln164, Tyr169, and Asp172 together coordinate ATP.

It belongs to the UMP kinase family. Homohexamer.

It is found in the cytoplasm. It catalyses the reaction UMP + ATP = UDP + ADP. Its pathway is pyrimidine metabolism; CTP biosynthesis via de novo pathway; UDP from UMP (UMPK route): step 1/1. With respect to regulation, inhibited by UTP. In terms of biological role, catalyzes the reversible phosphorylation of UMP to UDP. In Bartonella henselae (strain ATCC 49882 / DSM 28221 / CCUG 30454 / Houston 1) (Rochalimaea henselae), this protein is Uridylate kinase.